The chain runs to 41 residues: MKVRNSLRSLKSRHRDCQVVRRKGRIYVINKTNPRFKARQG.

Belongs to the bacterial ribosomal protein bL36 family.

This chain is Large ribosomal subunit protein bL36, found in Paracoccus denitrificans (strain Pd 1222).